A 360-amino-acid polypeptide reads, in one-letter code: Peptide chain release factor 1 (360 aa).

Gln-237 is subject to N5-methylglutamine.

The protein belongs to the prokaryotic/mitochondrial release factor family. Post-translationally, methylated by PrmC. Methylation increases the termination efficiency of RF1.

It localises to the cytoplasm. Its function is as follows. Peptide chain release factor 1 directs the termination of translation in response to the peptide chain termination codons UAG and UAA. This Pseudomonas putida (strain ATCC 700007 / DSM 6899 / JCM 31910 / BCRC 17059 / LMG 24140 / F1) protein is Peptide chain release factor 1.